Reading from the N-terminus, the 802-residue chain is Penicillin G acylase (802 aa).

Positions 1–26 are cleaved as a signal peptide; the sequence is MKMKWLISVIILFVFIFPQNLVFAGE. E177 provides a ligand contact to Ca(2+). Positions 235–265 are cleaved as a propeptide — spacer peptide; it reads SAVIKASEKVGKERENFVQSSEELGLPLKIG. The Nucleophile role is filled by S266. Position 341 (D341) interacts with Ca(2+).

The protein belongs to the peptidase S45 family. As to quaternary structure, heterodimer of an alpha subunit and a beta subunit processed from the same precursor. Ca(2+) is required as a cofactor.

Its subcellular location is the secreted. It carries out the reaction a penicillin + H2O = 6-aminopenicillanate + a carboxylate. This Rhizobium viscosum (Arthrobacter viscosus) protein is Penicillin G acylase (pac).